The following is a 139-amino-acid chain: Cytochrome c-551 (139 aa).

A signal peptide spans 1 to 20 (MTRTLAVVLAMTFSAAPVFA). Heme c-binding residues include Cys34, Cys37, His38, and Met116.

The protein belongs to the cytochrome c family. Binds 1 heme c group covalently per subunit.

The sequence is that of Cytochrome c-551 from Roseobacter denitrificans (strain ATCC 33942 / OCh 114) (Erythrobacter sp. (strain OCh 114)).